The sequence spans 481 residues: Trigger factor (481 aa).

Residues 174-261 (GDIAVVSFKG…LKDLKEKELP (88 aa)) form the PPIase FKBP-type domain. The disordered stretch occupies residues 435 to 481 (VKEKTTKASQASKTTKAKKTTTKTTKATKTATKTTKATKTQNKKEKK). Residues 456-474 (TKTTKATKTATKTTKATKT) are compositionally biased toward low complexity.

It belongs to the FKBP-type PPIase family. Tig subfamily.

It is found in the cytoplasm. It catalyses the reaction [protein]-peptidylproline (omega=180) = [protein]-peptidylproline (omega=0). Involved in protein export. Acts as a chaperone by maintaining the newly synthesized protein in an open conformation. Functions as a peptidyl-prolyl cis-trans isomerase. The polypeptide is Trigger factor (Prochlorococcus marinus (strain MIT 9312)).